Here is a 329-residue protein sequence, read N- to C-terminus: Sex comb on midleg-like protein 1 (329 aa).

A phosphoserine mark is found at Ser138 and Ser238. Positions 138 to 157 (SPTLPVSRRENNSPSNLPRP) are disordered. Positions 258–325 (WSVEAVVLFL…YYIDRLKQGK (68 aa)) constitute an SAM domain.

It belongs to the SCM family.

It is found in the nucleus. Putative Polycomb group (PcG) protein. PcG proteins act by forming multiprotein complexes, which are required to maintain the transcriptionally repressive state of homeotic genes throughout development. May be involved in spermatogenesis during sexual maturation. In Gorilla gorilla gorilla (Western lowland gorilla), this protein is Sex comb on midleg-like protein 1 (SCML1).